A 409-amino-acid chain; its full sequence is MKVLRFNQDASCFSAVSRPHSMTIYNCDPFGKCFELENSVVTSESCDTECLTKAQGDQCSNFVTEMLFATSLIAVVNRDQGLQKARKLRIVNTKRKTTICELTFPHEVVDIVMNRKRMCVLLSSDQIFIYDISCMKLLQTISVLEDKLKMAVSDQGHVSTSVVGRQLQGETSMVRIALCSDDKSILCYTAYCRTNKNSYILNDLVVYDALNMTPLNYLNTVHKGNVACLCISNDGKMVATASDKGTIVRIFSTGDENTLQSGNTLLHEFRRGTRPCSIYEMKIDPTRRYLACVGHTDTIHIFDLERQGQQNKSLSDSQSTALLREGKLSKESTLQFASFLSKKVISKIPNQNMERHFAHIKVDDSVRHCLGFPDEFSDRVYVASNNGEFQVWNIPQSGGECILVKKSKF.

4 WD repeats span residues 1–35 (MKVLRFNQDASCFSAVSRPHSMTIYNCDPFGKCFE), 221–261 (VHKG…TLQS), 273–312 (TRPCSIYEMKIDPTRRYLACVGHTDTIHIFDLERQGQQNK), and 361–402 (KVDD…GECI). The L/FRRG motif signature appears at 269 to 273 (FRRGT).

This sequence belongs to the WD repeat PROPPIN family.

The protein localises to the cytoplasm. The protein resides in the membrane. Its subcellular location is the vacuole membrane. Its function is as follows. Required for cytoplasm to vacuole transport (Cvt) vesicles formation and mitophagy. Involved in binding of phosphatidylethanolamine to ATG8 and in recruitment of ATG8 and ATG5 to the pre-autophagosomal structure. Protects ATG8 from ARG4-mediated cleavage. This is Autophagy-related protein 21 (ATG21) from Eremothecium gossypii (strain ATCC 10895 / CBS 109.51 / FGSC 9923 / NRRL Y-1056) (Yeast).